Reading from the N-terminus, the 62-residue chain is Sperm protamine P1 (62 aa).

The tract at residues 1-62 is disordered; that stretch reads MARYRRHSRS…RYSRRGRRRY (62 aa).

The protein belongs to the protamine P1 family. Testis.

The protein resides in the nucleus. It localises to the chromosome. In terms of biological role, protamines substitute for histones in the chromatin of sperm during the haploid phase of spermatogenesis. They compact sperm DNA into a highly condensed, stable and inactive complex. This is Sperm protamine P1 (PRM1) from Antechinomys laniger (Eastern jerboa marsupial).